The sequence spans 855 residues: DNA mismatch repair protein MutS (855 aa).

Residue 613–620 (GPNMGGKS) coordinates ATP. Residues 795–816 (ETTSLPHEVPSQQSGKPASPMQ) are disordered. Polar residues predominate over residues 796 to 816 (TTSLPHEVPSQQSGKPASPMQ).

The protein belongs to the DNA mismatch repair MutS family.

In terms of biological role, this protein is involved in the repair of mismatches in DNA. It is possible that it carries out the mismatch recognition step. This protein has a weak ATPase activity. The polypeptide is DNA mismatch repair protein MutS (Pseudomonas paraeruginosa (strain DSM 24068 / PA7) (Pseudomonas aeruginosa (strain PA7))).